The following is a 576-amino-acid chain: DNA mismatch repair protein MutL (576 aa).

This sequence belongs to the DNA mismatch repair MutL/HexB family.

Its function is as follows. This protein is involved in the repair of mismatches in DNA. It is required for dam-dependent methyl-directed DNA mismatch repair. May act as a 'molecular matchmaker', a protein that promotes the formation of a stable complex between two or more DNA-binding proteins in an ATP-dependent manner without itself being part of a final effector complex. The protein is DNA mismatch repair protein MutL of Chlamydia trachomatis serovar A (strain ATCC VR-571B / DSM 19440 / HAR-13).